The chain runs to 250 residues: ATP synthase subunit a (250 aa).

A run of 6 helical transmembrane segments spans residues 26-46 (FTNA…FLYL), 84-104 (FFPM…LGMF), 114-134 (IIVT…YGFY), 143-163 (LFVP…IEVI), 193-213 (FVAS…LPLI), and 216-236 (VALT…FAVL).

The protein belongs to the ATPase A chain family. In terms of assembly, F-type ATPases have 2 components, CF(1) - the catalytic core - and CF(0) - the membrane proton channel. CF(1) has five subunits: alpha(3), beta(3), gamma(1), delta(1), epsilon(1). CF(0) has three main subunits: a(1), b(2) and c(9-12). The alpha and beta chains form an alternating ring which encloses part of the gamma chain. CF(1) is attached to CF(0) by a central stalk formed by the gamma and epsilon chains, while a peripheral stalk is formed by the delta and b chains.

It is found in the cell inner membrane. Functionally, key component of the proton channel; it plays a direct role in the translocation of protons across the membrane. This Sinorhizobium fredii (strain NBRC 101917 / NGR234) protein is ATP synthase subunit a.